The chain runs to 1085 residues: Activating transcription factor 7-interacting protein 1 (1085 aa).

Disordered regions lie at residues 1–22 (MDNT…RASD), 47–109 (GKHE…VNVT), 127–245 (LGSN…NTDS), 329–381 (PNKS…VHSK), 469–499 (AAKE…ANAN), 517–560 (RNVG…TSSP), 650–843 (ASTN…TTIH), 889–910 (NSVR…QTGS), and 932–975 (GAPQ…ANTS). Polar residues predominate over residues 54–64 (SDLNSPLSNTD). Composition is skewed to basic and acidic residues over residues 82–91 (SEIKRPESRA) and 133–150 (NFHE…RESD). Composition is skewed to polar residues over residues 151 to 165 (TPSG…NSFS) and 173 to 182 (NDITIISNSP). Basic and acidic residues-rich tracts occupy residues 347–379 (EREV…DSVH) and 469–479 (AAKEDMKKKQE). A coiled-coil region spans residues 446-480 (NKRHKTVLTELQAKITRLTKRFGAAKEDMKKKQEN). Composition is skewed to low complexity over residues 487–499 (SSGK…ANAN), 529–547 (APVS…TPAS), and 651–666 (STNT…VSSP). Over residues 667 to 717 (GVQRNSPASAGSVRTTLAVQAVSTTHPVAQTTRTSLPTVGTSGLHNSTSSR) the composition is skewed to polar residues. Over residues 732–743 (TAPTEPPTITAP) the composition is skewed to low complexity. Composition is skewed to polar residues over residues 746-775 (ENQT…VTGS), 792-810 (SSQA…AQSI), and 830-843 (TGVP…TTIH). Over residues 950 to 968 (PRPVHPAPLPEAPQPPRLP) the composition is skewed to pro residues. One can recognise a Fibronectin type-III domain in the interval 976–1082 (LPQKPQLKLA…DPQSTDVISS (107 aa)).

It belongs to the MCAF family.

Its subcellular location is the nucleus. In terms of biological role, recruiter that couples transcriptional factors to general transcription apparatus and thereby modulates transcription regulation and chromatin formation. Can both act as an activator or a repressor depending on the context. Mediates MBD1-dependent transcriptional repression, probably by recruiting complexes containing histone methyltransferase activity. May belong to a complex that represses transcription and couples DNA methylation and histone H3 'Lys-9' trimethylation (H3K9me3). This is Activating transcription factor 7-interacting protein 1 (ATF7IP) from Gallus gallus (Chicken).